The following is a 310-amino-acid chain: Methionyl-tRNA formyltransferase (310 aa).

A (6S)-5,6,7,8-tetrahydrofolate-binding site is contributed by 111–114; it reads SILP.

It belongs to the Fmt family.

It carries out the reaction L-methionyl-tRNA(fMet) + (6R)-10-formyltetrahydrofolate = N-formyl-L-methionyl-tRNA(fMet) + (6S)-5,6,7,8-tetrahydrofolate + H(+). Attaches a formyl group to the free amino group of methionyl-tRNA(fMet). The formyl group appears to play a dual role in the initiator identity of N-formylmethionyl-tRNA by promoting its recognition by IF2 and preventing the misappropriation of this tRNA by the elongation apparatus. The protein is Methionyl-tRNA formyltransferase of Methylobacterium sp. (strain 4-46).